The chain runs to 58 residues: Putative antitoxin VapB16 (58 aa).

Functionally, putative antitoxin component of a possible type II toxin-antitoxin (TA) system. The cognate toxin is VapC16. The chain is Putative antitoxin VapB16 (vapB16) from Mycobacterium tuberculosis (strain ATCC 25618 / H37Rv).